The primary structure comprises 633 residues: Kinesin-like motor protein 9 (633 aa).

One can recognise a Kinesin motor domain in the interval 1-392 (MIQIFLRVKK…MRYSANAREI (392 aa)). 94–101 (GVSGAGKT) contributes to the ATP binding site. Disordered regions lie at residues 393–423 (LPPP…TKAL), 531–556 (LEEE…SRKL), and 575–633 (KLWP…INEL). Residues 398 to 423 (NENSGSQSPSHSLLQKSKNTSSTKAL) are compositionally biased toward polar residues. A coiled-coil region spans residues 417 to 541 (TSSTKALTSH…EEESIKESSA (125 aa)). Residues 578–587 (PQSTLIQAPN) are compositionally biased toward polar residues. The span at 604–623 (VSPIKPLSPSRRPPLTSLYS) shows a compositional bias: low complexity. A phosphoserine mark is found at S605, S611, and S613. A compositionally biased stretch (polar residues) spans 624–633 (GTTDIDINEL).

This sequence belongs to the TRAFAC class myosin-kinesin ATPase superfamily. Kinesin family. As to quaternary structure, interacts with ase1. Phosphorylated by cdc2 and dephosphorylated by clp1. Dephosphorylation is required for the interaction with ase1.

It localises to the nucleus. Its subcellular location is the cytoplasm. It is found in the cytoskeleton. The protein resides in the microtubule organizing center. The protein localises to the spindle pole body. Its function is as follows. Kinesin-like motor protein involved in anaphase B spindle elongation. The sequence is that of Kinesin-like motor protein 9 (klp9) from Schizosaccharomyces pombe (strain 972 / ATCC 24843) (Fission yeast).